The sequence spans 258 residues: Imidazole glycerol phosphate synthase subunit HisF (258 aa).

Catalysis depends on residues Asp12 and Asp131.

This sequence belongs to the HisA/HisF family. Heterodimer of HisH and HisF.

It localises to the cytoplasm. It catalyses the reaction 5-[(5-phospho-1-deoxy-D-ribulos-1-ylimino)methylamino]-1-(5-phospho-beta-D-ribosyl)imidazole-4-carboxamide + L-glutamine = D-erythro-1-(imidazol-4-yl)glycerol 3-phosphate + 5-amino-1-(5-phospho-beta-D-ribosyl)imidazole-4-carboxamide + L-glutamate + H(+). It functions in the pathway amino-acid biosynthesis; L-histidine biosynthesis; L-histidine from 5-phospho-alpha-D-ribose 1-diphosphate: step 5/9. In terms of biological role, IGPS catalyzes the conversion of PRFAR and glutamine to IGP, AICAR and glutamate. The HisF subunit catalyzes the cyclization activity that produces IGP and AICAR from PRFAR using the ammonia provided by the HisH subunit. This is Imidazole glycerol phosphate synthase subunit HisF from Nitrosomonas europaea (strain ATCC 19718 / CIP 103999 / KCTC 2705 / NBRC 14298).